A 166-amino-acid polypeptide reads, in one-letter code: MEGAMTEPGKEMTHLDARGRLRMVDVSGKERTAREARAEATVEVSPETLTRISEGTIAKGNVYEAARIAGIMAAKRTWELIPLCHPLQVTGVEIEFSADPARNEIRILSRVKTLDRTGVEMEALVAAAHAGLTIYDMCKAVDRGIVIRDIRLLYKSGGKSGTFERA.

Substrate is bound by residues 83–85 and 121–122; these read LCH and ME. The active site involves Asp-136.

It belongs to the MoaC family. Homohexamer; trimer of dimers.

The catalysed reaction is (8S)-3',8-cyclo-7,8-dihydroguanosine 5'-triphosphate = cyclic pyranopterin phosphate + diphosphate. Its pathway is cofactor biosynthesis; molybdopterin biosynthesis. In terms of biological role, catalyzes the conversion of (8S)-3',8-cyclo-7,8-dihydroguanosine 5'-triphosphate to cyclic pyranopterin monophosphate (cPMP). This Syntrophobacter fumaroxidans (strain DSM 10017 / MPOB) protein is Cyclic pyranopterin monophosphate synthase.